The chain runs to 146 residues: Large ribosomal subunit protein bL17 (146 aa).

The segment covering 124–134 (EASRATRAAAS) has biased composition (low complexity). The tract at residues 124-146 (EASRATRAAASKKAEEEAASEAE) is disordered.

This sequence belongs to the bacterial ribosomal protein bL17 family. In terms of assembly, part of the 50S ribosomal subunit. Contacts protein L32.

This is Large ribosomal subunit protein bL17 from Corynebacterium kroppenstedtii (strain DSM 44385 / JCM 11950 / CIP 105744 / CCUG 35717).